Consider the following 375-residue polypeptide: Hydrogenase-1 small chain (375 aa).

Residues 1-47 (MNTNNEETFYQAMRRKGVSRRSFLKYCSLAATSLGLGAAMTPRIAWA) constitute a signal peptide (tat-type signal). 8 residues coordinate [4Fe-4S] cluster: Cys64, Cys67, Cys162, Cys196, His234, Cys237, Cys262, and Cys268. Residues Cys277, Cys296, and Cys299 each coordinate [3Fe-4S] cluster. Residues 353–375 (HNRHKQQLADAGQQSPDNEDKQA) form a disordered region.

This sequence belongs to the [NiFe]/[NiFeSe] hydrogenase small subunit family. As to quaternary structure, heterodimer of a large and a small subunit. It depends on [4Fe-4S] cluster as a cofactor. The cofactor is [3Fe-4S] cluster. In terms of processing, predicted to be exported by the Tat system. The position of the signal peptide cleavage has not been experimentally proven.

The protein localises to the cell membrane. It catalyses the reaction H2 + A = AH2. The chain is Hydrogenase-1 small chain (hyaA) from Citrobacter freundii.